The chain runs to 388 residues: Acetate kinase (388 aa).

Asn14 lines the Mg(2+) pocket. ATP is bound at residue Lys21. Position 80 (Arg80) interacts with substrate. Asp137 serves as the catalytic Proton donor/acceptor. ATP contacts are provided by residues 197 to 201 (HLGNG), 271 to 273 (DFR), and 319 to 323 (GIGEH). Glu373 provides a ligand contact to Mg(2+).

It belongs to the acetokinase family. As to quaternary structure, homodimer. It depends on Mg(2+) as a cofactor. Mn(2+) serves as cofactor.

Its subcellular location is the cytoplasm. The enzyme catalyses acetate + ATP = acetyl phosphate + ADP. Its pathway is metabolic intermediate biosynthesis; acetyl-CoA biosynthesis; acetyl-CoA from acetate: step 1/2. In terms of biological role, catalyzes the formation of acetyl phosphate from acetate and ATP. Can also catalyze the reverse reaction. In Mycobacterium marinum (strain ATCC BAA-535 / M), this protein is Acetate kinase.